We begin with the raw amino-acid sequence, 409 residues long: Failed axon connections homolog (409 aa).

A helical transmembrane segment spans residues 68-88; it reads YLTGGALLAAAAYLLHELLVI. A disordered region spans residues 372–409; the sequence is DEGAENSFSRTPDTDFTGHSLFDSDVDMDDYTEHEQCK.

This sequence belongs to the FAX family.

It is found in the membrane. In terms of biological role, may play a role in axonal development. The polypeptide is Failed axon connections homolog (Faxc) (Rattus norvegicus (Rat)).